The chain runs to 256 residues: Fat body protein 2 (256 aa).

Residue 10–34 (VYVGSFSGIGWQMMMQLMQKDIKMM) participates in NAD(+) binding. A substrate-binding site is contributed by S138. Catalysis depends on Y151, which acts as the Proton acceptor.

The protein belongs to the short-chain dehydrogenases/reductases (SDR) family.

The chain is Fat body protein 2 (Fbp2) from Drosophila melanogaster (Fruit fly).